We begin with the raw amino-acid sequence, 218 residues long: MAQDCITIKGTRGGLLILLDASRDFNEIKANLAAKFAAARGFFRGAAFALVPTSPLNSQETAELEAICREHGLVPGNNITLPSRRRPGGNQAAHPDPVALTSTGLPTLLDEGNLRNGQEINYPGHVMWLGDVHQGATIRAGGNILIMGTLKGNAHAGSQGDRSAAIVAYRMEPEQLGIAGIIARSPEQKTRHPYPEIARLVGTRIVIDPYLSPKSSRN.

Belongs to the MinC family. Interacts with MinD and FtsZ.

Functionally, cell division inhibitor that blocks the formation of polar Z ring septums. Rapidly oscillates between the poles of the cell to destabilize FtsZ filaments that have formed before they mature into polar Z rings. Prevents FtsZ polymerization. This is Probable septum site-determining protein MinC from Moorella thermoacetica (strain ATCC 39073 / JCM 9320).